Consider the following 216-residue polypeptide: Chaperone protein TorD (216 aa).

It belongs to the TorD/DmsD family. TorD subfamily.

Its subcellular location is the cytoplasm. Involved in the biogenesis of TorA. Acts on TorA before the insertion of the molybdenum cofactor and, as a result, probably favors a conformation of the apoenzyme that is competent for acquiring the cofactor. The polypeptide is Chaperone protein TorD (Ferrimonas balearica (strain DSM 9799 / CCM 4581 / KCTC 23876 / PAT)).